Here is a 226-residue protein sequence, read N- to C-terminus: uncharacterized protein (226 aa).

The region spanning 71–207 (EPDDITVYFD…ADGLAKKILS (137 aa)) is the RNase H type-1 domain.

This is an uncharacterized protein from Bacillus subtilis (strain 168).